We begin with the raw amino-acid sequence, 97 residues long: Co-chaperonin GroES (97 aa).

It belongs to the GroES chaperonin family. As to quaternary structure, heptamer of 7 subunits arranged in a ring. Interacts with the chaperonin GroEL.

It localises to the cytoplasm. Its function is as follows. Together with the chaperonin GroEL, plays an essential role in assisting protein folding. The GroEL-GroES system forms a nano-cage that allows encapsulation of the non-native substrate proteins and provides a physical environment optimized to promote and accelerate protein folding. GroES binds to the apical surface of the GroEL ring, thereby capping the opening of the GroEL channel. This is Co-chaperonin GroES from Wigglesworthia glossinidia brevipalpis.